The chain runs to 213 residues: V-type proton ATPase subunit c'' (213 aa).

Over 1 to 14 (MNKESKDDDMSLGK) the chain is Vacuolar. The chain crosses the membrane as a helical span at residues 15-35 (FSFSHFLYYLVLIVVIVYGLY). Residues 36-61 (KLFTGHGSDINFGKFLLRTSPYMWAN) lie on the Cytoplasmic side of the membrane. A helical membrane pass occupies residues 62–82 (LGIALCVGLSVVGAAWGIFIT). At 83-100 (GSSMIGAGVRAPRITTKN) the chain is on the vacuolar side. Residues 101-121 (LISIIFCEVVAIYGLIIAIVF) traverse the membrane as a helical segment. Over 122–144 (SSKLTVATAENMYSKSNLYTGYS) the chain is Cytoplasmic. The chain crosses the membrane as a helical span at residues 145–165 (LFWAGITVGASNLICGIAVGI). The Vacuolar segment spans residues 166–183 (TGATAAISDAADSALFVK). A helical membrane pass occupies residues 184-204 (ILVIEIFGSILGLLGLIVGLL). Topologically, residues 205-213 (MAGKASEFQ) are cytoplasmic.

The protein belongs to the V-ATPase proteolipid subunit family. As to quaternary structure, V-ATPase is a heteromultimeric enzyme composed of a peripheral catalytic V1 complex (components A to H) attached to an integral membrane V0 proton pore complex (components: a, c, c', c'', d, e, f and VOA1). The decameric c-ring forms the proton-conducting pore, and is composed of eight proteolipid subunits c, one subunit c' and one subunit c''.

Its subcellular location is the vacuole membrane. Proton-conducting pore forming subunit of the V0 complex of vacuolar(H+)-ATPase (V-ATPase), a multisubunit enzyme composed of a peripheral complex (V1) that hydrolyzes ATP and a membrane integral complex (V0) that translocates protons. V-ATPase is responsible for acidifying and maintaining the pH of intracellular compartments. The chain is V-type proton ATPase subunit c'' (VMA16) from Saccharomyces cerevisiae (strain ATCC 204508 / S288c) (Baker's yeast).